The following is a 465-amino-acid chain: Probable protein phosphatase 2C 71 (465 aa).

Disordered stretches follow at residues 14-47, 68-119, and 133-191; these read RPCK…ACRA, RPRD…GEVT, and SGGA…PAEE. Positions 18 to 30 are enriched in pro residues; it reads LAPPPPPPLPVSP. 2 stretches are compositionally biased toward low complexity: residues 84–106 and 133–143; these read AVAP…AAAE and SGGAEATATSG. The region spanning 222–460 is the PPM-type phosphatase domain; it reads ASGAAILPHP…DDIAVVVSIV (239 aa). Positions 254, 255, 384, and 451 each coordinate Mn(2+).

This sequence belongs to the PP2C family. Requires Mg(2+) as cofactor. Mn(2+) serves as cofactor.

The catalysed reaction is O-phospho-L-seryl-[protein] + H2O = L-seryl-[protein] + phosphate. It catalyses the reaction O-phospho-L-threonyl-[protein] + H2O = L-threonyl-[protein] + phosphate. The polypeptide is Probable protein phosphatase 2C 71 (Oryza sativa subsp. japonica (Rice)).